The primary structure comprises 166 residues: Interferon gamma (166 aa).

Residues 1–23 form the signal peptide; that stretch reads MSYTTYFLAFQLCVTLCFSGSYC. Gln-24 is modified (pyrrolidone carboxylic acid). Asn-39 and Asn-106 each carry an N-linked (GlcNAc...) asparagine glycan.

Belongs to the type II (or gamma) interferon family. As to quaternary structure, homodimer. Interacts with IFNGR1 (via extracellular domain); this interaction promotes IFNGR1 dimerization. Released primarily from activated T lymphocytes.

The protein resides in the secreted. Its function is as follows. Type II interferon produced by immune cells such as T-cells and NK cells that plays crucial roles in antimicrobial, antiviral, and antitumor responses by activating effector immune cells and enhancing antigen presentation. Primarily signals through the JAK-STAT pathway after interaction with its receptor IFNGR1 to affect gene regulation. Upon IFNG binding, IFNGR1 intracellular domain opens out to allow association of downstream signaling components JAK2, JAK1 and STAT1, leading to STAT1 activation, nuclear translocation and transcription of IFNG-regulated genes. Many of the induced genes are transcription factors such as IRF1 that are able to further drive regulation of a next wave of transcription. Plays a role in class I antigen presentation pathway by inducing a replacement of catalytic proteasome subunits with immunoproteasome subunits. In turn, increases the quantity, quality, and repertoire of peptides for class I MHC loading. Increases the efficiency of peptide generation also by inducing the expression of activator PA28 that associates with the proteasome and alters its proteolytic cleavage preference. Up-regulates as well MHC II complexes on the cell surface by promoting expression of several key molecules such as cathepsins B/CTSB, H/CTSH, and L/CTSL. Participates in the regulation of hematopoietic stem cells during development and under homeostatic conditions by affecting their development, quiescence, and differentiation. The sequence is that of Interferon gamma (IFNG) from Sus scrofa (Pig).